The sequence spans 471 residues: Adenosylhomocysteinase (471 aa).

Residues T60, D135, and E196 each contribute to the substrate site. 197–199 contributes to the NAD(+) binding site; sequence TTT. Substrate-binding residues include K226 and D230. NAD(+) contacts are provided by residues N231, 260–265, E283, N318, 339–341, and N387; these read GYGDVG and IGH.

This sequence belongs to the adenosylhomocysteinase family. NAD(+) serves as cofactor.

It is found in the cytoplasm. The catalysed reaction is S-adenosyl-L-homocysteine + H2O = L-homocysteine + adenosine. The protein operates within amino-acid biosynthesis; L-homocysteine biosynthesis; L-homocysteine from S-adenosyl-L-homocysteine: step 1/1. Its function is as follows. May play a key role in the regulation of the intracellular concentration of adenosylhomocysteine. The chain is Adenosylhomocysteinase from Pelodictyon phaeoclathratiforme (strain DSM 5477 / BU-1).